Here is a 563-residue protein sequence, read N- to C-terminus: DNA repair protein rhp7 (563 aa).

The segment at 1-101 (MSSGSRVRGP…TDEEAEDNED (101 aa)) is disordered. The span at 39 to 59 (ESAGQSTGTESEVIQTPTSVE) shows a compositional bias: polar residues. Basic residues predominate over residues 78-90 (VKRRNLRNQKKKK).

The protein belongs to the RAD7 family.

The protein localises to the nucleus. Functionally, involved in global genome repair (GGR) via nucleotide excision repair (NER), in conjunction with rhp16, after UV irradiation. The protein is DNA repair protein rhp7 (rhp7) of Schizosaccharomyces pombe (strain 972 / ATCC 24843) (Fission yeast).